The sequence spans 297 residues: UTP--glucose-1-phosphate uridylyltransferase (297 aa).

Belongs to the UDPGP type 2 family.

It carries out the reaction alpha-D-glucose 1-phosphate + UTP + H(+) = UDP-alpha-D-glucose + diphosphate. It participates in carbohydrate metabolism; nucleotide-sugar metabolism. The protein operates within bacterial outer membrane biogenesis; lipopolysaccharide biosynthesis. May play a role in stationary phase survival. The sequence is that of UTP--glucose-1-phosphate uridylyltransferase (galF) from Salmonella typhimurium (strain LT2 / SGSC1412 / ATCC 700720).